The chain runs to 935 residues: Inter-alpha-trypsin inhibitor heavy chain H2 (935 aa).

The signal sequence occupies residues 1-18 (MKGLTCFLLCFLLSEAQG). Positions 19–53 (FEIPTNGLSEFAEYGDLAELALGKFHVVPGNRRSQ) are excised as a propeptide. A VIT domain is found at 45-174 (VVPGNRRSQE…KVQFELHYQE (130 aa)). N107 carries N-linked (GlcNAc...) asparagine glycosylation. 4-carboxyglutamate is present on E271. The 161-residue stretch at 297 to 457 (PKNILFVIDV…YDFLKRLSND (161 aa)) folds into the VWFA domain. N-linked (GlcNAc...) asparagine glycosylation occurs at N434. S455 carries the phosphoserine modification. At D691 the chain carries Aspartate 1-(chondroitin 4-sulfate)-ester. A propeptide spanning residues 692 to 935 (PHFIIYLPRS…PLLYSFLKRP (244 aa)) is cleaved from the precursor. S875 is modified (phosphoserine).

It belongs to the ITIH family. In terms of assembly, I-alpha-I plasma protease inhibitors are assembled from one or two heavy chains (HC) and one light chain, bikunin. Inter-alpha-inhibitor (I-alpha-I) is composed of ITIH1/HC1, ITIH2/HC2 and bikunin. Post-translationally, heavy chains are linked to bikunin via chondroitin 4-sulfate esterified to the alpha-carboxyl of the C-terminal aspartate after propeptide cleavage. In terms of processing, phosphorylated by FAM20C in the extracellular medium.

The protein localises to the secreted. In terms of biological role, may act as a carrier of hyaluronan in serum or as a binding protein between hyaluronan and other matrix protein, including those on cell surfaces in tissues to regulate the localization, synthesis and degradation of hyaluronan which are essential to cells undergoing biological processes. The polypeptide is Inter-alpha-trypsin inhibitor heavy chain H2 (ITIH2) (Sus scrofa (Pig)).